A 266-amino-acid polypeptide reads, in one-letter code: Transmembrane domain-containing protein TMIGD3 (266 aa).

Positions 1–20 (MEGSPAGPIEQKEARWESSW) are disordered. The helical transmembrane segment at 55 to 75 (FLPVMWLFILLSLALISDAMV) threads the bilayer. An N-linked (GlcNAc...) asparagine glycan is attached at Asn192. Residues 213 to 233 (ILIICILITGLGIISVISHLT) form a helical membrane-spanning segment.

Expressed in the lung and bone. Expressed at lower levels in osteosarcoma tissues (at protein level).

Its subcellular location is the membrane. Functionally, plays a suppressive role in osteosarcoma malignancy by inhibiting NF-kappa-B activity. This is Transmembrane domain-containing protein TMIGD3 from Homo sapiens (Human).